We begin with the raw amino-acid sequence, 414 residues long: Gamma-glutamyl phosphate reductase (414 aa).

Belongs to the gamma-glutamyl phosphate reductase family.

The protein localises to the cytoplasm. It catalyses the reaction L-glutamate 5-semialdehyde + phosphate + NADP(+) = L-glutamyl 5-phosphate + NADPH + H(+). It functions in the pathway amino-acid biosynthesis; L-proline biosynthesis; L-glutamate 5-semialdehyde from L-glutamate: step 2/2. Catalyzes the NADPH-dependent reduction of L-glutamate 5-phosphate into L-glutamate 5-semialdehyde and phosphate. The product spontaneously undergoes cyclization to form 1-pyrroline-5-carboxylate. The polypeptide is Gamma-glutamyl phosphate reductase (Xanthomonas oryzae pv. oryzae (strain KACC10331 / KXO85)).